The chain runs to 890 residues: Protein translocase subunit SecA (890 aa).

Residues glutamine 86, 104–108 (GEGKT), and aspartate 493 contribute to the ATP site. Residues 851–872 (EASHGDGDAKKAPVVKKEESGR) are compositionally biased toward basic and acidic residues. Residues 851-873 (EASHGDGDAKKAPVVKKEESGRN) form a disordered region. 4 residues coordinate Zn(2+): cysteine 876, cysteine 878, cysteine 887, and cysteine 888.

Belongs to the SecA family. As to quaternary structure, monomer and homodimer. Part of the essential Sec protein translocation apparatus which comprises SecA, SecYEG and auxiliary proteins SecDF. Other proteins may also be involved. The cofactor is Zn(2+).

The protein resides in the cell membrane. It is found in the cytoplasm. The catalysed reaction is ATP + H2O + cellular proteinSide 1 = ADP + phosphate + cellular proteinSide 2.. Its function is as follows. Part of the Sec protein translocase complex. Interacts with the SecYEG preprotein conducting channel. Has a central role in coupling the hydrolysis of ATP to the transfer of proteins into and across the cell membrane, serving as an ATP-driven molecular motor driving the stepwise translocation of polypeptide chains across the membrane. This chain is Protein translocase subunit SecA, found in Alkaliphilus oremlandii (strain OhILAs) (Clostridium oremlandii (strain OhILAs)).